The sequence spans 1175 residues: MRLNSIKLSGFKSFAEPTNFMLPGQLVGVVGPNGCGKSNIMDAVRWVLGESKASELRGESMQDVIFNGTTHRKPASRSSVELVFDNSDHRAGGQWGQFGEIAVKRVLTREGNSSYFINNQAVRRRDVQDVFLGTGLGPRAYAIIGQGTISRIIESRPEELRLFLEEAAGVSKYKERRRETENRLSATTENLTRVEDILRELNNNLDRLEKQAEVAAQYNALQSQVTLKQQQLWFLKRAEAEAEQDRVRVEGLQAVNELEERMADIRNNESGLETLRQAHYDASDQVNQAQAKLYESTAEVGKLEAEIRYVLEGRQRVQQRLQQLSEQVLLWNSRREEAEAEIENLEGAGMDAEEQAEMLAAQVEEQSMRLPDLEDALRNAQKADTDQRASVVQVQQQIQVLAAEQRSLDEQRRQFETRFERLRADRNALETPDEARLNNLQSQLQEARELAEMADAVLNELQDSVPQLDEDRRTRQQAVNAEAARHADLSARLEALKALQEKVKTDGKLQPWLAKHGLDGMQGLWSRIAIEPGWENALEAALRERLGALEVGRLDMVRGFLGSGGHDAPPARLAFFSPPQGAPAPAAGRWQHLSDLLRVNDAGLRAVLGDWLQDCYTAPTLEEALSRRSELRPGETVYVPTGHAVSSHSVSFYAQDSEQSGLLARAQEIEHLEKEVRAQALISDESRTALVRAESAYAEASQRLVSARREASESQSRAHELQVETLRLSQLAEQARARNAQISADLAEVEAQLSDIEERRVAAEARFEELDMQLADSQERHAQLGDKVLESERRLNESREQLRTLERQAQEATFSRRSLEARRGELSRTIETASQQARSLADEQQRAQDELTRLTDAAAQGGLQDALDLKMQREQAVAARRSEYDDLTNKLRASDERRQQLEKALDPLRQRITEFQLKEQAARLGLEQYSTLLEEAGADLAAVSQSIAEANVRMHGLQGEIDRLHREIAALGAVNLAALDELKLARERKTFLDAQTEDLTQAMNTLEDAIRKIDAETRELLSGTFETVNGHFGRMFPELFGGGQAKLVITGDEILDSGVQVIAQPPGKKNQTIHLLSGGEKALTAIALVFAIFQLNPAPFCLLDEVDAPLDDANTERYAKLVASMSKSTQFLFISHNKIAMEMAQQLIGVTMQEQGVSRIVAVDMESALSMAELS.

32-39 contributes to the ATP binding site; it reads PNGCGKSN. Positions 170 to 504 form a coiled coil; it reads VSKYKERRRE…ALKALQEKVK (335 aa). One can recognise an SMC hinge domain in the interval 524–625; that stretch reads LWSRIAIEPG…YTAPTLEEAL (102 aa). 2 coiled-coil regions span residues 684-918 and 944-1022; these read DESR…FQLK and SQSI…ELLS. Residues 807 to 849 are disordered; it reads RQAQEATFSRRSLEARRGELSRTIETASQQARSLADEQQRAQD. Residues 817–828 are compositionally biased toward basic and acidic residues; the sequence is RSLEARRGELSR. Residues 829–838 show a composition bias toward polar residues; the sequence is TIETASQQAR. Residues 840-849 show a composition bias toward basic and acidic residues; it reads LADEQQRAQD.

This sequence belongs to the SMC family. In terms of assembly, homodimer.

Its subcellular location is the cytoplasm. In terms of biological role, required for chromosome condensation and partitioning. This Delftia acidovorans (strain DSM 14801 / SPH-1) protein is Chromosome partition protein Smc.